An 85-amino-acid polypeptide reads, in one-letter code: UPF0473 protein CPR_1590 (85 aa).

Belongs to the UPF0473 family.

This is UPF0473 protein CPR_1590 from Clostridium perfringens (strain SM101 / Type A).